The following is a 199-amino-acid chain: Small ribosomal subunit protein uS4 (199 aa).

The region spanning 94–157 (SRLDNLVYRA…RKLKLVQEAL (64 aa)) is the S4 RNA-binding domain.

This sequence belongs to the universal ribosomal protein uS4 family. As to quaternary structure, part of the 30S ribosomal subunit. Contacts protein S5. The interaction surface between S4 and S5 is involved in control of translational fidelity.

One of the primary rRNA binding proteins, it binds directly to 16S rRNA where it nucleates assembly of the body of the 30S subunit. Functionally, with S5 and S12 plays an important role in translational accuracy. The protein is Small ribosomal subunit protein uS4 of Mycoplasmopsis synoviae (strain 53) (Mycoplasma synoviae).